A 37-amino-acid polypeptide reads, in one-letter code: Desulforedoxin (37 aa).

Fe cation is bound by residues cysteine 10, cysteine 13, cysteine 29, and cysteine 30.

It to the N-terminal section of desulfoferrodoxin. As to quaternary structure, homodimer. Fe cation is required as a cofactor.

In terms of biological role, nonheme iron protein possibly involved in electron transport. The protein is Desulforedoxin (dsr) of Megalodesulfovibrio gigas (Desulfovibrio gigas).